The primary structure comprises 631 residues: Transcription factor dibT (631 aa).

A DNA-binding region (zn(2)-C6 fungal-type) is located at residues 11–38 (CWTCRLRRKRCDSVQPVCGSCQSLEITC). The span at 123–144 (SLADSSASTPSTSSGRPTTLRS) shows a compositional bias: low complexity. Disordered stretches follow at residues 123–148 (SLAD…SVDR) and 469–488 (GLKD…TSAG).

The protein resides in the nucleus. Functionally, transcription factor; part of the gene cluster that mediates the biosynthesis of pestalotiollide B which is part of dibenzodioxocinones, a novel class of inhibitors against cholesterol ester transfer protein (CEPT). Acts as the key transcription factor within the cluster and positively regulates the expression of the cluster genes and the subsequent production of dibenzodioxocinones such as pestalotiollide B, pestalotiollide C, 1',2'-dehydropenicillide, 3'-methoxy-1',2'-dehydropenicillide and 1',2'-epoxy-3',4'-didehydropenicillide. Required for the expression of most PKS genes outside of the dibenzodioxocinones cluster, (43 out of 48 defined PKS genes), and promotes pigmentation of the mycelium and conidia. The polypeptide is Transcription factor dibT (Pestalotiopsis microspora).